Reading from the N-terminus, the 202-residue chain is ATP-dependent Clp protease proteolytic subunit (202 aa).

The active-site Nucleophile is serine 106. Histidine 131 is a catalytic residue.

It belongs to the peptidase S14 family. As to quaternary structure, fourteen ClpP subunits assemble into 2 heptameric rings which stack back to back to give a disk-like structure with a central cavity, resembling the structure of eukaryotic proteasomes.

The protein localises to the cytoplasm. It catalyses the reaction Hydrolysis of proteins to small peptides in the presence of ATP and magnesium. alpha-casein is the usual test substrate. In the absence of ATP, only oligopeptides shorter than five residues are hydrolyzed (such as succinyl-Leu-Tyr-|-NHMec, and Leu-Tyr-Leu-|-Tyr-Trp, in which cleavage of the -Tyr-|-Leu- and -Tyr-|-Trp bonds also occurs).. Functionally, cleaves peptides in various proteins in a process that requires ATP hydrolysis. Has a chymotrypsin-like activity. Plays a major role in the degradation of misfolded proteins. The sequence is that of ATP-dependent Clp protease proteolytic subunit from Paracidovorax citrulli (strain AAC00-1) (Acidovorax citrulli).